The following is a 689-amino-acid chain: Small ribosomal subunit protein mS39 (689 aa).

The transit peptide at 1–37 (MAVVSAVRWLGLRSRLGQPLTGRRAGLCEQARSCRFY) directs the protein to the mitochondrion. Lys126 is modified (N6-acetyllysine). PPR repeat units follow at residues 149–183 (IKDI…GTTV), 184–219 (SLET…EALE), 255–289 (NEHS…RLHA), 290–330 (DVYT…KVKP), 331–367 (NLQT…GIEP), 368–409 (SLAT…SPKD), 412–446 (DDKF…DNWK), 454–488 (RNFY…AYFP), 489–523 (HSQT…GHTF), and 572–606 (PATS…NKIP). Residues 665 to 689 (NLTALTSDSDTDSSSDSDSDTSEGK) are disordered. Residues 673–689 (SDTDSSSDSDSDTSEGK) show a composition bias toward acidic residues.

Belongs to the mitochondrion-specific ribosomal protein mS39 family. In terms of assembly, component of the mitochondrial small ribosomal subunit (mt-SSU). Mature mammalian 55S mitochondrial ribosomes consist of a small (28S) and a large (39S) subunit. The 28S small subunit contains a 12S ribosomal RNA (12S mt-rRNA) and 30 different proteins. The 39S large subunit contains a 16S rRNA (16S mt-rRNA), a copy of mitochondrial valine transfer RNA (mt-tRNA(Val)), which plays an integral structural role, and 52 different proteins. Associated with the 12S mitochondrial rRNA (12S mt-rRNA). Abundant in testes, skeletal muscle and heart tissue.

The protein localises to the mitochondrion. In terms of biological role, mitochondrial RNA-binding protein that has a role in mitochondrial translation. The sequence is that of Small ribosomal subunit protein mS39 (PTCD3) from Homo sapiens (Human).